Consider the following 421-residue polypeptide: 3-phosphoshikimate 1-carboxyvinyltransferase (421 aa).

Residues Lys19, Ser20, and Arg24 each coordinate 3-phosphoshikimate. Position 19 (Lys19) interacts with phosphoenolpyruvate. 2 residues coordinate phosphoenolpyruvate: Gly88 and Arg116. 3-phosphoshikimate is bound by residues Ser160, Gln162, Asp307, and Lys334. Gln162 contributes to the phosphoenolpyruvate binding site. Asp307 (proton acceptor) is an active-site residue. Phosphoenolpyruvate contacts are provided by Arg338 and Arg380.

It belongs to the EPSP synthase family. In terms of assembly, monomer.

Its subcellular location is the cytoplasm. It carries out the reaction 3-phosphoshikimate + phosphoenolpyruvate = 5-O-(1-carboxyvinyl)-3-phosphoshikimate + phosphate. The protein operates within metabolic intermediate biosynthesis; chorismate biosynthesis; chorismate from D-erythrose 4-phosphate and phosphoenolpyruvate: step 6/7. In terms of biological role, catalyzes the transfer of the enolpyruvyl moiety of phosphoenolpyruvate (PEP) to the 5-hydroxyl of shikimate-3-phosphate (S3P) to produce enolpyruvyl shikimate-3-phosphate and inorganic phosphate. This chain is 3-phosphoshikimate 1-carboxyvinyltransferase, found in Thermotoga sp. (strain RQ2).